Here is a 187-residue protein sequence, read N- to C-terminus: Protein GrpE (187 aa).

Residues 1-30 are disordered; that stretch reads MEKKETKSESEKTNKQDNKNTKSQKKENLN.

The protein belongs to the GrpE family. As to quaternary structure, homodimer.

It is found in the cytoplasm. Participates actively in the response to hyperosmotic and heat shock by preventing the aggregation of stress-denatured proteins, in association with DnaK and GrpE. It is the nucleotide exchange factor for DnaK and may function as a thermosensor. Unfolded proteins bind initially to DnaJ; upon interaction with the DnaJ-bound protein, DnaK hydrolyzes its bound ATP, resulting in the formation of a stable complex. GrpE releases ADP from DnaK; ATP binding to DnaK triggers the release of the substrate protein, thus completing the reaction cycle. Several rounds of ATP-dependent interactions between DnaJ, DnaK and GrpE are required for fully efficient folding. The protein is Protein GrpE of Borreliella burgdorferi (strain ATCC 35210 / DSM 4680 / CIP 102532 / B31) (Borrelia burgdorferi).